We begin with the raw amino-acid sequence, 614 residues long: FAD-dependent monooxygenase terD (614 aa).

Positions 1-23 are cleaved as a signal peptide; it reads MSSKFDVVICGSGTAGLAAATWL. Residues 6–35, Gln-44, Val-137, and 239–241 contribute to the FAD site; these read DVVICGSGTAGLAAATWLAQYGVDCKILES and RVY. Asn-260 carries an N-linked (GlcNAc...) asparagine glycan. The FAD site is built by Tyr-282 and Asp-303. An N-linked (GlcNAc...) asparagine glycan is attached at Asn-317. Residue Ser-319 participates in FAD binding. Asn-602 carries N-linked (GlcNAc...) asparagine glycosylation.

The protein belongs to the PheA/TfdB FAD monooxygenase family. FAD is required as a cofactor.

The protein operates within secondary metabolite biosynthesis. FAD-dependent monooxygenase; part of the gene cluster that mediates the biosynthesis of terrein, a fungal metabolite with ecological, antimicrobial, antiproliferative, and antioxidative activities. The first step in the pathway is performed by the polyketide synthase terA that produces 4-hydroxy-6-methylpyranon (4-HMP), orsellinic acid (OA), and 2,3-dehydro-6-hydroxymellein (2,3-dehydro-6-HM) by condensing acetyl-CoA with two, three, or four malonyl-CoA units, respectively. 4-HMP and OA are not pathway intermediates, but are rather shunt or side products. 2,3-dehydro-6-HM is further converted to 6-hydroxymellein (6-HM) by the 6-hydroxymellein synthase terB. The monooxygenases terC and terD, the multicopper oxidase terE and the Kelch-like protein terF are then involved in the transformation of 6-HM to terrein. Even if they are co-regulated with the other terrein cluster genes, terH and terI seem to be dispensable for terrein production; whereas one or both of the 2 transporters terG and terJ are probably required for efficient secretion of metabolites. In Aspergillus terreus (strain NIH 2624 / FGSC A1156), this protein is FAD-dependent monooxygenase terD.